We begin with the raw amino-acid sequence, 472 residues long: MFEVVIGLEVHTQLNTKTKIFCSCATSFGEAPNTNVCPTCLALPGALPVLNEEAVKKAIAFGKAVNATINKKSVFNRKNYFYPDLPKAYQISQFDIPIVEKGELFINVKGENKRIGITRAHLEEDAGKNIHENNFSKVDLNRAGTPLLEIVSEPELRSSDEAVAYLKKLHSIIRFLDISDANMQEGSFRCDANVSIRPKGDTKLYTRVEIKNLNSFRFIQKAIEYEVKRQSEAWEDGTYEQEVVQETRLFDTTNLVTRSMRGKEEAAEYRYFPDPDLLPVLLKDEFLDIKIPELPDEKKARFIDELGIKESDAEVLISSLEMSRFFESLISQNLNPKLCVNWLNTELMGLLKGELTIENSPVDAQKLGILIKRIEDGTISAKAAKDVLAFVFENTSVEIDEAIEKLGLKQVSDDSAIEAVIEQILNANADKVAEYKSGKEKLFGFFVGQTMKEGKGAFNPAKVNEILKTKLG.

It belongs to the GatB/GatE family. GatB subfamily. Heterotrimer of A, B and C subunits.

The enzyme catalyses L-glutamyl-tRNA(Gln) + L-glutamine + ATP + H2O = L-glutaminyl-tRNA(Gln) + L-glutamate + ADP + phosphate + H(+). It carries out the reaction L-aspartyl-tRNA(Asn) + L-glutamine + ATP + H2O = L-asparaginyl-tRNA(Asn) + L-glutamate + ADP + phosphate + 2 H(+). Functionally, allows the formation of correctly charged Asn-tRNA(Asn) or Gln-tRNA(Gln) through the transamidation of misacylated Asp-tRNA(Asn) or Glu-tRNA(Gln) in organisms which lack either or both of asparaginyl-tRNA or glutaminyl-tRNA synthetases. The reaction takes place in the presence of glutamine and ATP through an activated phospho-Asp-tRNA(Asn) or phospho-Glu-tRNA(Gln). This is Aspartyl/glutamyl-tRNA(Asn/Gln) amidotransferase subunit B from Campylobacter jejuni (strain RM1221).